The following is a 253-amino-acid chain: Short chain dehydrogenase ple7 (253 aa).

The chain crosses the membrane as a helical span at residues 5 to 25; sequence IVIVTGASHGIGLATVNLLLA. NADP(+) is bound by residues valine 8, arginine 116, tyrosine 148, lysine 152, and asparagine 184. Tyrosine 148 (proton acceptor) is an active-site residue. Lysine 152 functions as the Lowers pKa of active site Tyr in the catalytic mechanism. The N-linked (GlcNAc...) asparagine glycan is linked to asparagine 187.

This sequence belongs to the short-chain dehydrogenases/reductases (SDR) family.

Its subcellular location is the membrane. It functions in the pathway secondary metabolite biosynthesis; terpenoid biosynthesis. Functionally, short chain dehydrogenase; part of the gene cluster that mediates the biosynthesis of pleuromutilin, a tricyclic diterpene showing antibacterial properties. The geranylgeranyl diphosphate (GGPP) synthase ple4 catalyzes the first step in pleuromutilin biosynthesis. GGPP is then substrate of the premutilin synthase (PS) ple3 to yield premutilin. Premutilin synthase is a bifunctional enzyme composed of the fusion of a class II diterpene cyclase (DTC) and a class I diterpene synthase (DTS), with the corresponding domains and active sites containing characteristic aspartate-rich motifs. GGPP is first converted to mutildienyl-diphosphate (MPP) at the class II DTC site. MPP is subsequently further cyclized at the class I DTS site, followed by a 1,5-hydride shift and addition of water prior to terminating deprotonation, to yield premutilin. The cytochrome P450 monooxygenases ple5 and ple6 hydroxylate premutilin at C-11 and C-3, respectively, producing 11-hydroxypremutilin and 3-hydroxypremutilin. The combination of the actions of both ple5 and ple6 leads to the production of 3,11-dihydroxypremutilin. The short chain dehydrogenase ple7 further converts 3,11-dihydroxypremutilin into mutilin. The acetyltransferase ple2 then acetylates mutilin to produce 14-O-acetylmutilin. Finally, the cytochrome P450 monooxygenase ple1 catalyzes hydroxylation on the alpha position of the acetyl side chain of 14-O-acetylmutilin to yield pleuromutilin. This Rhodocybe pseudopiperita (Clitopilus pseudopiperitus) protein is Short chain dehydrogenase ple7.